Reading from the N-terminus, the 449-residue chain is UNC93-like protein MFSD11 (449 aa).

A helical transmembrane segment spans residues 8–28 (LFNIIILGVAFMFMFTAFQTC). A glycan (N-linked (GlcNAc...) asparagine) is linked at N40. A run of 5 helical transmembrane segments spans residues 53-73 (AIIY…VAIV), 74-94 (GPQL…AVFN), 96-116 (PFPW…AVLW), 138-158 (IFWA…YFAW), and 170-190 (RTVF…FFLI). At S204 the chain carries Phosphoserine. The next 6 helical transmembrane spans lie at 239–259 (MLLL…FSGV), 277–297 (LIGL…SLFG), 309–329 (PVVL…FLNM), 359–379 (FLLG…LGFL), 385–405 (APAF…AFFY), and 410–430 (LLHW…LSFF).

The protein belongs to the unc-93 family.

It localises to the membrane. The sequence is that of UNC93-like protein MFSD11 (MFSD11) from Pongo abelii (Sumatran orangutan).